A 117-amino-acid chain; its full sequence is Ribonuclease P protein component (117 aa).

The protein belongs to the RnpA family. Consists of a catalytic RNA component (M1 or rnpB) and a protein subunit.

It carries out the reaction Endonucleolytic cleavage of RNA, removing 5'-extranucleotides from tRNA precursor.. RNaseP catalyzes the removal of the 5'-leader sequence from pre-tRNA to produce the mature 5'-terminus. It can also cleave other RNA substrates such as 4.5S RNA. The protein component plays an auxiliary but essential role in vivo by binding to the 5'-leader sequence and broadening the substrate specificity of the ribozyme. This chain is Ribonuclease P protein component, found in Lactococcus lactis subsp. cremoris (strain MG1363).